A 689-amino-acid chain; its full sequence is Glycine--tRNA ligase beta subunit (689 aa).

It belongs to the class-II aminoacyl-tRNA synthetase family. As to quaternary structure, tetramer of two alpha and two beta subunits.

It localises to the cytoplasm. The catalysed reaction is tRNA(Gly) + glycine + ATP = glycyl-tRNA(Gly) + AMP + diphosphate. The sequence is that of Glycine--tRNA ligase beta subunit from Dictyoglomus turgidum (strain DSM 6724 / Z-1310).